We begin with the raw amino-acid sequence, 1558 residues long: ABC transporter NFT1 (1558 aa).

Topologically, residues 1–29 are extracellular; it reads MIKNGTCPFWERDDLSECARREYIEFKFP. The N-linked (GlcNAc...) asparagine glycan is linked to Asn-4. A helical membrane pass occupies residues 30 to 50; sequence LFILLTGMIYAFCKVFRAFYL. Residues 51-103 lie on the Cytoplasmic side of the membrane; it reads RRKNHTNEAPEFEEQGNGNHEYARFSVLRLKSAWESRSFCNVNNRSTFDKFKK. The chain crosses the membrane as a helical span at residues 104-124; sequence FIEGAFIVLQLTIHLYILSNM. The Extracellular portion of the chain corresponds to 125 to 130; the sequence is PMDNKK. A helical transmembrane segment spans residues 131–151; it reads FFHQGFLVQMFLWILLLVVIT. Residues 152–169 are Cytoplasmic-facing; sequence LRLISASQSFRWVLACKR. Residues 170 to 190 traverse the membrane as a helical segment; the sequence is DLWAVSFYSYASLFTLSILPL. Topologically, residues 191-201 are extracellular; the sequence is RSVFIGKIKDK. The helical transmembrane segment at 202–222 threads the bilayer; that stretch reads IMVKYIISETFIDLALLLLLS. The Cytoplasmic segment spans residues 223-302; the sequence is TSSIEGTRYS…SSKKGRLLPN (80 aa). Residues 303 to 323 form a helical membrane-spanning segment; it reads IICYFKAVFISQLFLAFVSSF. An ABC transmembrane type-1 1 domain is found at 311–621; it reads FISQLFLAFV…IASTVSLLIQ (311 aa). The Extracellular segment spans residues 324 to 351; sequence LNFVPSLLMPRILSYVNDPKSQSWNLVS. The chain crosses the membrane as a helical span at residues 352-374; the sequence is LYVSSMLVSKIIATTCRGQGLFL. The Cytoplasmic portion of the chain corresponds to 375 to 449; the sequence is GEKGTMQLRT…VMSIDAFKVS (75 aa). Positions 410–434 are disordered; that stretch reads NASTSFEENPDSSEAEPRKKSSRKD. Residues 424-434 show a composition bias toward basic and acidic residues; the sequence is AEPRKKSSRKD. A helical transmembrane segment spans residues 450-470; the sequence is EAMNTFYLACEAVFMTVTALM. Topologically, residues 471 to 481 are extracellular; sequence ILYSLLGWSAF. A helical transmembrane segment spans residues 482 to 504; the sequence is AGTFALLAMIPLNFWCATFYGNY. Residues 505–558 lie on the Cytoplasmic side of the membrane; the sequence is QADQLILTDKRTSGISEALNSIRVIKLLAWENLFYQKIINVRDGEIRLLKKKAT. The chain crosses the membrane as a helical span at residues 559-579; the sequence is IFFLNHLIWFFGPTLVSAITF. Residues 580–584 lie on the Extracellular side of the membrane; it reads SVFIK. A helical transmembrane segment spans residues 585 to 605; the sequence is FQNQTLTPTIAFTALSLFAIL. The Cytoplasmic segment spans residues 606–953; it reads RTPMDQIAST…KFSAYKWLAD (348 aa). Residues 651-892 form the ABC transporter 1 domain; that stretch reads FGFEDASMEW…NEFLRESINN (242 aa). ATP is bound at residue 686 to 693; it reads GPTGSGKS. Residues 892-901 show a composition bias toward polar residues; it reads NDSKNTTHNQ. Residues 892–926 are disordered; that stretch reads NDSKNTTHNQIDLKRSTTSKKTKNGDPEGENSQDE. Residues 954–974 traverse the membrane as a helical segment; it reads YFGGLGVVFVFTSSAILIHGI. Residues 961 to 1251 enclose the ABC transmembrane type-1 2 domain; sequence VFVFTSSAIL…IIKVFSSVEL (291 aa). Topologically, residues 975–1013 are extracellular; sequence TLSQGFWLRYWLETGSSGSKSTWLYRIVEGHSNIYFILT. Residues 1014–1034 traverse the membrane as a helical segment; sequence YIVIGFVSSFLTSGKVWIAII. Over 1035-1082 the chain is Cytoplasmic; that stretch reads SGTNVTKKIFAKLLSSILYAKLRFHNVTPTGRIMNRFSKDMDIIDQQL. Residues 1083-1105 form a helical membrane-spanning segment; the sequence is IPNFEGLSYSVVVCLWIILLIGY. Residues 1106-1109 lie on the Extracellular side of the membrane; that stretch reads VTPQ. Residues 1110-1132 form a helical membrane-spanning segment; that stretch reads FLLFAIPLCALYYTVCTLYLRAS. Topologically, residues 1133–1199 are cytoplasmic; that stretch reads RELKRIDNIN…ATEWITYRVD (67 aa). The chain crosses the membrane as a helical span at residues 1200–1220; it reads IIGTLVLFSSSVMIIMKASYL. At 1221–1222 the chain is on the extracellular side; sequence DA. The helical transmembrane segment at 1223–1243 threads the bilayer; it reads GLAGILLSNAFSFTETAQWII. Residues 1244–1558 are Cytoplasmic-facing; the sequence is KVFSSVELLM…LAKVSFDNKR (315 aa). In terms of domain architecture, ABC transporter 2 spans 1285 to 1538; sequence VELKNLSLRY…RNTIFYRLCR (254 aa). 1319-1326 provides a ligand contact to ATP; that stretch reads GRTGAGKS.

This sequence belongs to the ABC transporter superfamily. ABCC family. Conjugate transporter (TC 3.A.1.208) subfamily.

The protein localises to the membrane. This chain is ABC transporter NFT1 (NFT1), found in Saccharomyces cerevisiae (strain YJM789) (Baker's yeast).